Consider the following 468-residue polypeptide: 6-phospho-beta-galactosidase (468 aa).

The D-galactose 6-phosphate site is built by Q19, H116, N159, E160, and N297. The active-site Proton donor is E160. E375 acts as the Nucleophile in catalysis. Positions 428, 429, 435, and 437 each coordinate D-galactose 6-phosphate.

This sequence belongs to the glycosyl hydrolase 1 family.

The enzyme catalyses a 6-phospho-beta-D-galactoside + H2O = D-galactose 6-phosphate + an alcohol. The protein operates within carbohydrate metabolism; lactose degradation; D-galactose 6-phosphate and beta-D-glucose from lactose 6-phosphate: step 1/1. This is 6-phospho-beta-galactosidase from Lactococcus lactis subsp. lactis (Streptococcus lactis).